The following is a 338-amino-acid chain: Ornithine carbamoyltransferase (338 aa).

Residues 56–59 (STRT), R107, and 134–137 (HPTQ) each bind carbamoyl phosphate. Residues N168, D232, and 236–237 (SM) each bind L-ornithine. Residues 274 to 275 (CL) and R320 contribute to the carbamoyl phosphate site.

Belongs to the aspartate/ornithine carbamoyltransferase superfamily. OTCase family.

The protein localises to the cytoplasm. The enzyme catalyses carbamoyl phosphate + L-ornithine = L-citrulline + phosphate + H(+). The protein operates within amino-acid biosynthesis; L-arginine biosynthesis; L-arginine from L-ornithine and carbamoyl phosphate: step 1/3. Its function is as follows. Reversibly catalyzes the transfer of the carbamoyl group from carbamoyl phosphate (CP) to the N(epsilon) atom of ornithine (ORN) to produce L-citrulline. This Buchnera aphidicola subsp. Schizaphis graminum (strain Sg) protein is Ornithine carbamoyltransferase (argI).